The sequence spans 820 residues: Leucine--tRNA ligase (820 aa).

The 'HIGH' region signature appears at 42 to 52; the sequence is PYPSGDLHMGH. The 'KMSKS' region motif lies at 576-580; that stretch reads KMSKS. An ATP-binding site is contributed by lysine 579.

It belongs to the class-I aminoacyl-tRNA synthetase family.

The protein resides in the cytoplasm. It carries out the reaction tRNA(Leu) + L-leucine + ATP = L-leucyl-tRNA(Leu) + AMP + diphosphate. The sequence is that of Leucine--tRNA ligase from Coxiella burnetii (strain RSA 331 / Henzerling II).